Here is a 455-residue protein sequence, read N- to C-terminus: Oxysterols receptor LXR-beta (455 aa).

The span at 1-10 (MSTPTTNSVD) shows a compositional bias: polar residues. A disordered region spans residues 1 to 53 (MSTPTTNSVDTPLPGNGPSTPSSSPGGKEDGPEPCPGGADPDVPSTDGADSAS). The tract at residues 1–80 (MSTPTTNSVD…GPAPKMLGDE (80 aa)) is transactivation AF-1; required for ligand-independent transactivation function. The span at 14–26 (PGNGPSTPSSSPG) shows a compositional bias: low complexity. A DNA-binding region (nuclear receptor) is located at residues 79 to 156 (DELCQVCGDT…AGMREQCVLS (78 aa)). 2 consecutive NR C4-type zinc fingers follow at residues 82–102 (CQVC…CEGC) and 120–144 (CRGG…LRKC). Residues 164–210 (KIRKQQQQQQQQSSPTGPGVSSSSPASGPGASPGGSDGGGQGSGEGE) are disordered. Residues 168-193 (QQQQQQQQSSPTGPGVSSSSPASGPG) are compositionally biased toward low complexity. Over residues 194-210 (ASPGGSDGGGQGSGEGE) the composition is skewed to gly residues. The tract at residues 214–455 (LTAAQELMIQ…LLSEIWDVHE (242 aa)) is transactivation AF-2; required for ligand-dependent transactivation function; mediates interaction with CCAR2. In terms of domain architecture, NR LBD spans 217–455 (AQELMIQQLV…LLSEIWDVHE (239 aa)). Glycyl lysine isopeptide (Lys-Gly) (interchain with G-Cter in SUMO2) cross-links involve residues Lys-404 and Lys-442.

This sequence belongs to the nuclear hormone receptor family. NR1 subfamily. As to quaternary structure, forms a heterodimer with RXR. Interacts with CCAR2 (via N-terminus) in a ligand-independent manner. Interacts (when sumoylated) with GPS2; interaction with GPS2 onto hepatic acute phase protein promoters prevents N-Cor corepressor complex dissociation. Interacts with ABCA12 and ABCA1; this interaction is required for ABCA1 localization to the cell surface and is necessary for its normal activity and stability. Sumoylated by SUMO2 at Lys-404 and Lys-442 during the hepatic acute phase response, leading to promote interaction with GPS2 and prevent N-Cor corepressor complex dissociation.

Its subcellular location is the nucleus. Its function is as follows. Nuclear receptor that exhibits a ligand-dependent transcriptional activation activity. Binds preferentially to double-stranded oligonucleotide direct repeats having the consensus half-site sequence 5'-AGGTCA-3' and 4-nt spacing (DR-4). Regulates cholesterol uptake through MYLIP-dependent ubiquitination of LDLR, VLDLR and LRP8; DLDLR and LRP8. Interplays functionally with RORA for the regulation of genes involved in liver metabolism. Induces LPCAT3-dependent phospholipid remodeling in endoplasmic reticulum (ER) membranes of hepatocytes, driving SREBF1 processing and lipogenesis. Via LPCAT3, triggers the incorporation of arachidonate into phosphatidylcholines of ER membranes, increasing membrane dynamics and enabling triacylglycerols transfer to nascent very low-density lipoprotein (VLDL) particles. Via LPCAT3 also counteracts lipid-induced ER stress response and inflammation, likely by modulating SRC kinase membrane compartmentalization and limiting the synthesis of lipid inflammatory mediators. Plays an anti-inflammatory role during the hepatic acute phase response by acting as a corepressor: inhibits the hepatic acute phase response by preventing dissociation of the N-Cor corepressor complex. This is Oxysterols receptor LXR-beta (NR1H2) from Bos taurus (Bovine).